The primary structure comprises 206 residues: Ras-related protein Ral-B (206 aa).

A GTP-binding site is contributed by Gly21 to Ala29. An Effector region motif is present at residues Tyr43–Tyr51. GTP-binding positions include Asp68–Gln72, Asn128–Asp131, and Ser158–Lys160. The segment covering Lys180 to Gly189 has biased composition (basic and acidic residues). The interval Lys180–Leu206 is disordered. Residue Cys203 is modified to Cysteine methyl ester. A lipid anchor (S-geranylgeranyl cysteine) is attached at Cys203. The propeptide at Cys204–Leu206 is removed in mature form.

Belongs to the small GTPase superfamily. Ras family. As to quaternary structure, interacts with EXOC2/Sec5 and EXOC8/Exo84. Interacts (via effector domain) with RALBP1. Post-translationally, prenylation is essential for membrane localization. In terms of processing, the farnesylated form confers resistance to the proapoptotic and anti-anchorage-dependent growth effects of some geranylgeranyltransferase I inhibitors.

It localises to the cell membrane. It is found in the midbody. The enzyme catalyses GTP + H2O = GDP + phosphate + H(+). With respect to regulation, alternates between an inactive form bound to GDP and an active form bound to GTP. Activated by a guanine nucleotide-exchange factor (GEF) and inactivated by a GTPase-activating protein (GAP). Functionally, multifunctional GTPase involved in a variety of cellular processes including gene expression, cell migration, cell proliferation, oncogenic transformation and membrane trafficking. Accomplishes its multiple functions by interacting with distinct downstream effectors. Acts as a GTP sensor for GTP-dependent exocytosis of dense core vesicles. Required both to stabilize the assembly of the exocyst complex and to localize functional exocyst complexes to the leading edge of migrating cells. Required for suppression of apoptosis. In late stages of cytokinesis, upon completion of the bridge formation between dividing cells, mediates exocyst recruitment to the midbody to drive abscission. Involved in ligand-dependent receptor mediated endocytosis of the EGF and insulin receptors. This is Ras-related protein Ral-B (RALB) from Pongo abelii (Sumatran orangutan).